The primary structure comprises 310 residues: Malate dehydrogenase (310 aa).

Residues 7–12 and Asp-32 each bind NAD(+); that span reads GAGNVG. Substrate contacts are provided by Arg-81 and Arg-87. NAD(+)-binding positions include Asn-94 and 117 to 119; that span reads VSN. Positions 119 and 150 each coordinate substrate. The active-site Proton acceptor is His-174.

Belongs to the LDH/MDH superfamily. MDH type 3 family.

The enzyme catalyses (S)-malate + NAD(+) = oxaloacetate + NADH + H(+). In terms of biological role, catalyzes the reversible oxidation of malate to oxaloacetate. The chain is Malate dehydrogenase from Pelodictyon phaeoclathratiforme (strain DSM 5477 / BU-1).